The primary structure comprises 195 residues: Imidazoleglycerol-phosphate dehydratase (195 aa).

Belongs to the imidazoleglycerol-phosphate dehydratase family.

The protein resides in the cytoplasm. It carries out the reaction D-erythro-1-(imidazol-4-yl)glycerol 3-phosphate = 3-(imidazol-4-yl)-2-oxopropyl phosphate + H2O. It functions in the pathway amino-acid biosynthesis; L-histidine biosynthesis; L-histidine from 5-phospho-alpha-D-ribose 1-diphosphate: step 6/9. This chain is Imidazoleglycerol-phosphate dehydratase, found in Heliobacterium modesticaldum (strain ATCC 51547 / Ice1).